Consider the following 303-residue polypeptide: uncharacterized protein (303 aa).

Its subcellular location is the cytoplasm. This is an uncharacterized protein from Saccharomyces cerevisiae (strain ATCC 204508 / S288c) (Baker's yeast).